The chain runs to 231 residues: Small ribosomal subunit protein uS2 (231 aa).

Belongs to the universal ribosomal protein uS2 family.

This chain is Small ribosomal subunit protein uS2, found in Blochmanniella floridana.